A 472-amino-acid chain; its full sequence is MRNRRIRILFTVIVFVFALLGLILPLSGNVNDISILRFFPNINLGLDIQGGVLLEYSFDVPEGVNTSEVVDNVITVLRRRMDNAGYTEAIVSEVVSGGESRVRVEIPGISDTQRAEELIGSKGKLYFAEVLEVVESTTTPEITRNRTIQINGEEIEMYSYVKDSNNPNLWYRVKNVFEFGDAPFQITGLDVTDAVASLNSQGAGFVVNLNFSNEGRQKFELATANLVNERIAIILDDEVIIAPVVRERISQGRAEISGIESMEEAQNIAVLIKSGNLPVDLVKYQERTLGPTLGRDIVTTIINAGIIGLIIVMIYMIIFYRWMGVIADIALIYNTFLLMGILSWTGAILTLPGIAGIILTFGTTVDGNIIIYERIKEELRIGRPPLTAVKFGFNKVFSTIFDANITTILAGLVLFFVTSGSIRGFAVTLIIGVLGAMFTNLVVSRLLLESTSHFLKPEKYVKGIVVEKGGTK.

A run of 6 helical transmembrane segments spans residues 8-28 (ILFT…PLSG), 300-320 (TIIN…IIFY), 325-347 (VIAD…WTGA), 353-375 (GIAG…YERI), 396-416 (VFST…VLFF), and 424-444 (GFAV…LVVS).

Belongs to the SecD/SecF family. SecD subfamily. As to quaternary structure, forms a complex with SecF. Part of the essential Sec protein translocation apparatus which comprises SecA, SecYEG and auxiliary proteins SecDF. Other proteins may also be involved.

It is found in the cell inner membrane. Part of the Sec protein translocase complex. Interacts with the SecYEG preprotein conducting channel. SecDF uses the proton motive force (PMF) to complete protein translocation after the ATP-dependent function of SecA. This is Protein translocase subunit SecD from Petrotoga mobilis (strain DSM 10674 / SJ95).